Here is a 38-residue protein sequence, read N- to C-terminus: Mu/omega-theraphotoxin-Mb1a (38 aa).

Intrachain disulfides connect Cys7–Cys21, Cys14–Cys26, and Cys20–Cys33. Thr38 carries the threonine amide modification.

The protein belongs to the neurotoxin 10 (Hwtx-1) family. 28 (Jztx-11) subfamily. In terms of tissue distribution, expressed by the venom gland.

Its subcellular location is the secreted. Paralytic toxin that inhibits insect voltage-gated sodium (Nav) and calcium (Cav) channels in P.americana (American cockroach) dorsal unpaired median (DUM) neurons, and inhibits the B.germanica (German cockroach) Nav channel (BgNaV1). Also shows a delay in fast inactivation when tested on BgNaV1. May act as a gating-modifier toxin on Nav and as a pore blocker on Cav. In vivo, reversibly paralyzes both L.cuprina (Australian sheep blowfly) and M.domestica (housefly), but does not affect larvae of H.armigera (cotton bollworms). The chain is Mu/omega-theraphotoxin-Mb1a from Monocentropus balfouri (Socotra Island blue baboon tarantula).